The sequence spans 307 residues: L-lactate dehydrogenase (307 aa).

NAD(+) is bound by residues Val13, Asp34, Arg39, Tyr64, and 78-79 (GV). A substrate-binding site is contributed by Arg87. Residue Ser100 participates in NAD(+) binding. Position 119–122 (119–122 (NPVD)) interacts with substrate. Thr142 lines the NAD(+) pocket. Residue 147-150 (DSAR) participates in substrate binding. The active-site Proton acceptor is His174. Thr224 serves as a coordination point for substrate.

This sequence belongs to the LDH/MDH superfamily. LDH family. As to quaternary structure, homotetramer.

It is found in the cytoplasm. The enzyme catalyses (S)-lactate + NAD(+) = pyruvate + NADH + H(+). It functions in the pathway fermentation; pyruvate fermentation to lactate; (S)-lactate from pyruvate: step 1/1. In terms of biological role, catalyzes the conversion of lactate to pyruvate. This is L-lactate dehydrogenase from Lactobacillus delbrueckii subsp. bulgaricus (strain ATCC BAA-365 / Lb-18).